A 338-amino-acid polypeptide reads, in one-letter code: Ketol-acid reductoisomerase (NADP(+)) (338 aa).

The 181-residue stretch at Met-1–Thr-181 folds into the KARI N-terminal Rossmann domain. NADP(+)-binding positions include Tyr-24–Gln-27, Arg-47, and Ser-52. The active site involves His-107. An NADP(+)-binding site is contributed by Gly-133. The region spanning Asn-182 to Ile-327 is the KARI C-terminal knotted domain. Mg(2+)-binding residues include Asp-190, Glu-194, Glu-226, and Glu-230. Ser-251 lines the substrate pocket.

This sequence belongs to the ketol-acid reductoisomerase family. It depends on Mg(2+) as a cofactor.

It carries out the reaction (2R)-2,3-dihydroxy-3-methylbutanoate + NADP(+) = (2S)-2-acetolactate + NADPH + H(+). The catalysed reaction is (2R,3R)-2,3-dihydroxy-3-methylpentanoate + NADP(+) = (S)-2-ethyl-2-hydroxy-3-oxobutanoate + NADPH + H(+). Its pathway is amino-acid biosynthesis; L-isoleucine biosynthesis; L-isoleucine from 2-oxobutanoate: step 2/4. The protein operates within amino-acid biosynthesis; L-valine biosynthesis; L-valine from pyruvate: step 2/4. Involved in the biosynthesis of branched-chain amino acids (BCAA). Catalyzes an alkyl-migration followed by a ketol-acid reduction of (S)-2-acetolactate (S2AL) to yield (R)-2,3-dihydroxy-isovalerate. In the isomerase reaction, S2AL is rearranged via a Mg-dependent methyl migration to produce 3-hydroxy-3-methyl-2-ketobutyrate (HMKB). In the reductase reaction, this 2-ketoacid undergoes a metal-dependent reduction by NADPH to yield (R)-2,3-dihydroxy-isovalerate. This Polaromonas sp. (strain JS666 / ATCC BAA-500) protein is Ketol-acid reductoisomerase (NADP(+)).